The sequence spans 498 residues: ATP synthase subunit beta, chloroplastic (498 aa).

172–179 contributes to the ATP binding site; sequence GGAGVGKT.

Belongs to the ATPase alpha/beta chains family. As to quaternary structure, F-type ATPases have 2 components, CF(1) - the catalytic core - and CF(0) - the membrane proton channel. CF(1) has five subunits: alpha(3), beta(3), gamma(1), delta(1), epsilon(1). CF(0) has four main subunits: a(1), b(1), b'(1) and c(9-12).

It is found in the plastid. The protein resides in the chloroplast thylakoid membrane. It carries out the reaction ATP + H2O + 4 H(+)(in) = ADP + phosphate + 5 H(+)(out). Produces ATP from ADP in the presence of a proton gradient across the membrane. The catalytic sites are hosted primarily by the beta subunits. This is ATP synthase subunit beta, chloroplastic from Nicotiana sylvestris (Wood tobacco).